A 326-amino-acid polypeptide reads, in one-letter code: ATP synthase gamma chain (326 aa).

Belongs to the ATPase gamma chain family. F-type ATPases have 2 components, CF(1) - the catalytic core - and CF(0) - the membrane proton channel. CF(1) has five subunits: alpha(3), beta(3), gamma(1), delta(1), epsilon(1). CF(0) has three main subunits: a, b and c.

The protein resides in the cell membrane. Its function is as follows. Produces ATP from ADP in the presence of a proton gradient across the membrane. The gamma chain is believed to be important in regulating ATPase activity and the flow of protons through the CF(0) complex. In Corynebacterium jeikeium (strain K411), this protein is ATP synthase gamma chain.